Reading from the N-terminus, the 911-residue chain is Protein translocase subunit SecA (911 aa).

ATP-binding positions include glutamine 90, 108–112 (GEGKT), and aspartate 515. 4 residues coordinate Zn(2+): cysteine 891, cysteine 893, cysteine 902, and histidine 903.

It belongs to the SecA family. In terms of assembly, monomer and homodimer. Part of the essential Sec protein translocation apparatus which comprises SecA, SecYEG and auxiliary proteins SecDF-YajC and YidC. It depends on Zn(2+) as a cofactor.

It localises to the cell inner membrane. The protein localises to the cytoplasm. It carries out the reaction ATP + H2O + cellular proteinSide 1 = ADP + phosphate + cellular proteinSide 2.. Functionally, part of the Sec protein translocase complex. Interacts with the SecYEG preprotein conducting channel. Has a central role in coupling the hydrolysis of ATP to the transfer of proteins into and across the cell membrane, serving both as a receptor for the preprotein-SecB complex and as an ATP-driven molecular motor driving the stepwise translocation of polypeptide chains across the membrane. In Blochmanniella pennsylvanica (strain BPEN), this protein is Protein translocase subunit SecA.